A 447-amino-acid chain; its full sequence is DNA primase DnaG (447 aa).

One can recognise a Toprim domain in the interval 200–274; that stretch reads DSIIVVEGRA…DIDYVARAPE (75 aa). Mg(2+)-binding residues include glutamate 206, aspartate 248, and aspartate 250.

Belongs to the archaeal DnaG primase family. Forms a ternary complex with MCM helicase and DNA. Component of the archaeal exosome complex. The cofactor is Mg(2+).

It catalyses the reaction ssDNA + n NTP = ssDNA/pppN(pN)n-1 hybrid + (n-1) diphosphate.. RNA polymerase that catalyzes the synthesis of short RNA molecules used as primers for DNA polymerase during DNA replication. Also part of the exosome, which is a complex involved in RNA degradation. Acts as a poly(A)-binding protein that enhances the interaction between heteromeric, adenine-rich transcripts and the exosome. This Pyrococcus abyssi (strain GE5 / Orsay) protein is DNA primase DnaG.